A 66-amino-acid polypeptide reads, in one-letter code: Movement protein TGBp3 (66 aa).

The Lumenal segment spans residues 1–2; it reads MD. The chain crosses the membrane as a helical span at residues 3–23; it reads FTTLVIIGVYLLVFIVYFAKI. The Cytoplasmic segment spans residues 24 to 66; that stretch reads NTSMCTISISGASVEISGCDNPALFEILPNLKPFDHGLSVPSI.

The protein belongs to the Tymovirales TGBp3 protein family.

The protein resides in the host endoplasmic reticulum membrane. Functionally, plays a role in viral cell-to-cell propagation, by facilitating genome transport to neighboring plant cells through plasmosdesmata. May induce the formation of granular vesicles derived from the Endoplasmic reticulum, which align on actin filaments. In Trifolium (WCMV), this protein is Movement protein TGBp3.